Reading from the N-terminus, the 869-residue chain is Translation initiation factor IF-2 (869 aa).

Disordered stretches follow at residues 51–78 and 105–277; these read KQHG…NMGK and EEET…SDLK. Over residues 67-76 the composition is skewed to polar residues; it reads QRKTTSTLNM. Low complexity predominate over residues 110 to 119; that stretch reads RALAEQQAQL. Basic and acidic residues predominate over residues 120–241; it reads EAEKAAAEEA…KKQEAEEVHV (122 aa). The tr-type G domain occupies 369 to 542; it reads SRAPVVTIMG…ELLDLKAPPT (174 aa). A G1 region spans residues 378-385; the sequence is GHVDHGKT. GTP is bound at residue 378–385; sequence GHVDHGKT. The interval 403-407 is G2; the sequence is GITQH. Residues 424–427 form a G3 region; sequence DTPG. Residues 424–428 and 478–481 each bind GTP; these read DTPGH and NKMD. Residues 478-481 form a G4 region; sequence NKMD. The segment at 514 to 516 is G5; sequence SAK.

It belongs to the TRAFAC class translation factor GTPase superfamily. Classic translation factor GTPase family. IF-2 subfamily.

It localises to the cytoplasm. In terms of biological role, one of the essential components for the initiation of protein synthesis. Protects formylmethionyl-tRNA from spontaneous hydrolysis and promotes its binding to the 30S ribosomal subunits. Also involved in the hydrolysis of GTP during the formation of the 70S ribosomal complex. In Pseudoalteromonas atlantica (strain T6c / ATCC BAA-1087), this protein is Translation initiation factor IF-2.